A 540-amino-acid chain; its full sequence is Phosphoenolpyruvate carboxykinase (ATP) (540 aa).

Position 65 (R65) interacts with substrate. K87 carries the N6-acetyllysine modification. Residues Y207 and K213 each coordinate substrate. ATP is bound by residues K213, H232, and 248–256; that span reads GLSGTGKTT. 2 residues coordinate Mn(2+): K213 and H232. D269 contacts Mn(2+). ATP-binding positions include E297, R333, 449-450, and T455; that span reads RI. R333 serves as a coordination point for substrate. Residue K523 is modified to N6-acetyllysine.

This sequence belongs to the phosphoenolpyruvate carboxykinase (ATP) family. Monomer. Requires Mn(2+) as cofactor.

It localises to the cytoplasm. It catalyses the reaction oxaloacetate + ATP = phosphoenolpyruvate + ADP + CO2. The protein operates within carbohydrate biosynthesis; gluconeogenesis. Functionally, involved in the gluconeogenesis. Catalyzes the conversion of oxaloacetate (OAA) to phosphoenolpyruvate (PEP) through direct phosphoryl transfer between the nucleoside triphosphate and OAA. The protein is Phosphoenolpyruvate carboxykinase (ATP) of Shigella flexneri serotype 5b (strain 8401).